Consider the following 159-residue polypeptide: Early E3 18.5 kDa glycoprotein (159 aa).

The N-terminal stretch at 1-17 is a signal peptide; sequence MRYMILGLLALAAVCSA. Topologically, residues 18–123 are lumenal; that stretch reads AKKVEFKEPA…PPQKCLENTG (106 aa). Cystine bridges form between cysteine 28-cysteine 45 and cysteine 39-cysteine 100. N-linked (GlcNAc...) asparagine; by host glycans are attached at residues asparagine 29 and asparagine 78. The helical transmembrane segment at 124–144 threads the bilayer; sequence TFCSTALLITALALVCTLLYL. Residues 145-159 are Cytoplasmic-facing; it reads KYKSRRSFIDEKKMP. The Di-lysine motif motif lies at 156 to 159; the sequence is KKMP.

Belongs to the adenoviridae E19 family. Both disulfide bonds are absolutely critical for the interaction with MHC antigens. In terms of processing, N-glycosylated; high-mannose.

Its subcellular location is the host endoplasmic reticulum membrane. Functionally, binds and retains class I heavy chains in the endoplasmic reticulum during the early period of virus infection, thereby impairing their transport to the cell surface. Also delays the expression of class I alleles that it cannot affect by direct retention. Binds transporters associated with antigen processing (TAP) and acts as a tapasin inhibitor, preventing class I/TAP association. In consequence, infected cells are masked for immune recognition by cytotoxic T-lymphocytes. The polypeptide is Early E3 18.5 kDa glycoprotein (Homo sapiens (Human)).